Consider the following 113-residue polypeptide: MSEEPKKIDIKGKGRAIEDLIPDIDDEEDDVDFQDLSSSGESDDSDDSMQEDYDDIHDEEPEDYSAIDPTNIMCSTRTRRKKIDFTKVLEEGQNEDDFEEEDEDYIPPQDKTM.

The span at 1-18 shows a compositional bias: basic and acidic residues; that stretch reads MSEEPKKIDIKGKGRAIE. 2 disordered regions span residues 1–71 and 83–113; these read MSEE…DPTN and IDFT…DKTM. Composition is skewed to acidic residues over residues 20–33, 41–65, and 92–105; these read LIPD…DVDF, ESDD…EDYS, and GQNE…DEDY.

This sequence belongs to the CHZ1 family. Forms a heterotrimer with H2A.Z-H2B, stabilizing the association of the histone dimer.

The protein localises to the cytoplasm. Its subcellular location is the nucleus. Functionally, forms a chaperone-bound H2A.Z-H2B complex that acts as a source for SWR1 complex-dependent H2A to H2A.Z histone replacement in chromatin. In Schizosaccharomyces pombe (strain 972 / ATCC 24843) (Fission yeast), this protein is Histone H2A.Z-specific chaperone chz1 (chz1).